A 283-amino-acid chain; its full sequence is DegV domain-containing protein CPE0304 (283 aa).

Positions 3 to 281 (VKVITDSTSC…VKSVGIAYAR (279 aa)) constitute a DegV domain. The hexadecanoate site is built by S60 and S92.

Its function is as follows. May bind long-chain fatty acids, such as palmitate, and may play a role in lipid transport or fatty acid metabolism. The chain is DegV domain-containing protein CPE0304 from Clostridium perfringens (strain 13 / Type A).